The following is a 120-amino-acid chain: Chemokine vCXCL1 (120 aa).

This sequence belongs to the intercrine alpha (chemokine CxC) family. As to quaternary structure, interacts with host CXCR1 and CXCR2.

Functionally, acts as a functional chemokine, inducing calcium mobilization, chemotaxis, and degranulation of neutrophils. Contributes to the induction of neutrophil chemotaxis by interacting with host CXCR1 and CXCR2 receptors. In Human cytomegalovirus (strain Merlin) (HHV-5), this protein is Chemokine vCXCL1 (UL146).